Consider the following 129-residue polypeptide: Thylakoid-associated single-stranded DNA-binding protein slr1034 (129 aa).

One can recognise an SSB domain in the interval 1-100; sequence MNSFVLMATV…LTASRISLVD (100 aa). The segment at 99–129 is disordered; it reads VDSGNGINPGELSSPPEPEAVDLSNTDDIPF.

In terms of assembly, homotetramer.

Its subcellular location is the cellular thylakoid membrane. This Synechocystis sp. (strain ATCC 27184 / PCC 6803 / Kazusa) protein is Thylakoid-associated single-stranded DNA-binding protein slr1034.